A 345-amino-acid chain; its full sequence is tRNA N6-adenosine threonylcarbamoyltransferase (345 aa).

Fe cation contacts are provided by H113 and H117. Residues 142-146, D175, G188, D192, and N282 contribute to the substrate site; that span reads AISGG. Position 310 (D310) interacts with Fe cation.

Belongs to the KAE1 / TsaD family. It depends on Fe(2+) as a cofactor.

It is found in the cytoplasm. The enzyme catalyses L-threonylcarbamoyladenylate + adenosine(37) in tRNA = N(6)-L-threonylcarbamoyladenosine(37) in tRNA + AMP + H(+). Functionally, required for the formation of a threonylcarbamoyl group on adenosine at position 37 (t(6)A37) in tRNAs that read codons beginning with adenine. Is involved in the transfer of the threonylcarbamoyl moiety of threonylcarbamoyl-AMP (TC-AMP) to the N6 group of A37, together with TsaE and TsaB. TsaD likely plays a direct catalytic role in this reaction. The sequence is that of tRNA N6-adenosine threonylcarbamoyltransferase from Bdellovibrio bacteriovorus (strain ATCC 15356 / DSM 50701 / NCIMB 9529 / HD100).